The sequence spans 212 residues: Pyridoxine/pyridoxamine 5'-phosphate oxidase (212 aa).

Substrate contacts are provided by residues 8–11 (RREY) and Lys-66. FMN-binding positions include 61-66 (RIVLLK), 76-77 (FT), Arg-82, Lys-83, and Gln-105. Substrate contacts are provided by Tyr-123, Arg-127, and Ser-131. FMN is bound by residues 140–141 (QS) and Trp-185. 191 to 193 (RLH) lines the substrate pocket. Residue Arg-195 participates in FMN binding.

This sequence belongs to the pyridoxamine 5'-phosphate oxidase family. In terms of assembly, homodimer. It depends on FMN as a cofactor.

The enzyme catalyses pyridoxamine 5'-phosphate + O2 + H2O = pyridoxal 5'-phosphate + H2O2 + NH4(+). It catalyses the reaction pyridoxine 5'-phosphate + O2 = pyridoxal 5'-phosphate + H2O2. Its pathway is cofactor metabolism; pyridoxal 5'-phosphate salvage; pyridoxal 5'-phosphate from pyridoxamine 5'-phosphate: step 1/1. The protein operates within cofactor metabolism; pyridoxal 5'-phosphate salvage; pyridoxal 5'-phosphate from pyridoxine 5'-phosphate: step 1/1. Functionally, catalyzes the oxidation of either pyridoxine 5'-phosphate (PNP) or pyridoxamine 5'-phosphate (PMP) into pyridoxal 5'-phosphate (PLP). This is Pyridoxine/pyridoxamine 5'-phosphate oxidase from Shewanella pealeana (strain ATCC 700345 / ANG-SQ1).